Reading from the N-terminus, the 72-residue chain is Conorfamide-Tx2 (72 aa).

A signal peptide spans 1 to 19 (MSGRGFLLLALLLLVTVEA). Positions 20 to 25 (TRVEKK) are excised as a propeptide. The positively charged region crucial for activity against MRGPRX1 receptors stretch occupies residues 32-39 (AWSGPRNR). Position 43 is an isoleucine amide (Ile43). Positions 44–72 (GRRDMQSPLLSERLRFRALGFRQPSSQKQ) are excised as a propeptide.

It belongs to the FARP (FMRFamide related peptide) family. In terms of tissue distribution, expressed by the venom duct.

The protein localises to the secreted. In terms of biological role, this peptide activates human sensory neuron-specific G-protein coupled receptors MRGPRX1, but not mouse receptors (EC(50)=0.54 uM). Compared with the agonist chloroquine (anti-malaria drug), it is 600-fold more potent. In vivo, induces itch sensation, since intradermal cheek injection into humanized transgenic mouse (mouse MRGPRX1 replaced by human MRGPRX1) induces scratching. In vivo, treatment of zebrafish larvae with high doses (10 uM) induces hypoactivity at the beginning of the experiment during the dark phase and hyperactivity in the strobe phase after one hour, even after the removal of the toxin from the solution. The chain is Conorfamide-Tx2 from Conus textile (Cloth-of-gold cone).